We begin with the raw amino-acid sequence, 812 residues long: ATP-dependent RNA helicase dbp4 (812 aa).

Positions 1-28 are disordered; the sequence is MAPSNGHRNGKHAKSSNKSGNLKRKRVQ. A compositionally biased stretch (basic residues) spans 8-26; sequence RNGKHAKSSNKSGNLKRKR. Positions 48–76 match the Q motif motif; that stretch reads ESFSDLPISEPTLSGLTSSHFKTLTDIQS. The Helicase ATP-binding domain maps to 79-253; sequence ISHALKGRDV…RLSLQDPEYV (175 aa). 92–99 lines the ATP pocket; it reads AKTGSGKT. Positions 201–204 match the DEAD box motif; sequence DEAD. Residues 279–438 enclose the Helicase C-terminal domain; the sequence is KLDTLWSFIR…SIKNQLQNMC (160 aa). Disordered regions lie at residues 503-538, 560-626, and 687-797; these read NASR…TKYD, DGTI…ISDK, and ARFL…EKQI. Basic and acidic residues-rich tracts occupy residues 521–538, 579–596, 610–626, and 687–709; these read EGGK…TKYD, LSVK…HAED, EDHT…ISDK, and ARFL…EIAK. The segment covering 710 to 719 has biased composition (basic residues); sequence QKRREKKEKR. Composition is skewed to basic and acidic residues over residues 720 to 736 and 763 to 794; these read KARE…EERV and EAPR…DAGE.

The protein belongs to the DEAD box helicase family. DDX10/DBP4 subfamily. As to quaternary structure, interacts with the U3 and U14 snoRNAs. Associates with pre-ribosomal complexes.

It localises to the nucleus. Its subcellular location is the nucleolus. The catalysed reaction is ATP + H2O = ADP + phosphate + H(+). In terms of biological role, ATP-dependent RNA helicase required for ribosome biogenesis. Involved in the release of U14 snoRNA in pre-ribosomal complexes. Required for pre-rRNA cleavage at site A2. This Emericella nidulans (strain FGSC A4 / ATCC 38163 / CBS 112.46 / NRRL 194 / M139) (Aspergillus nidulans) protein is ATP-dependent RNA helicase dbp4 (dbp4).